The primary structure comprises 83 residues: Host transcription reprogramming factor 9 (83 aa).

An N-terminal signal peptide occupies residues 1-19 (MQFSKITLAIVLYALGTAA). Residues 54-77 (YRCDKCEKEFVKGNDFFNHGGRGH) form a C2H2-type zinc finger.

The protein resides in the secreted. It is found in the host nucleus. Probable secreted effector that translocates into the nuclei of host cells to reprogram the expression of targeted genes by binding on effector binding elements in rice. This Pyricularia oryzae (strain 70-15 / ATCC MYA-4617 / FGSC 8958) (Rice blast fungus) protein is Host transcription reprogramming factor 9.